We begin with the raw amino-acid sequence, 68 residues long: MPQKDPCQKQACEIQKCLQANNYLESKCQAVIQELRKCCARYPKGRSLVCSGFEKEEEEKLAMKSGSK.

A CHCH domain is found at 4–46 (KDPCQKQACEIQKCLQANNYLESKCQAVIQELRKCCARYPKGR). 2 consecutive short sequence motifs (cx9C motif) follow at residues 7–17 (CQKQACEIQKC) and 28–38 (CQAVIQELRKC). Disulfide bonds link Cys-7–Cys-38, Cys-17–Cys-28, and Cys-39–Cys-50.

Belongs to the CMC4 family. In terms of tissue distribution, expressed in many tissues.

It is found in the mitochondrion. In Mus musculus (Mouse), this protein is Cx9C motif-containing protein 4 (Cmc4).